We begin with the raw amino-acid sequence, 550 residues long: Chaperonin GroEL (550 aa).

ATP is bound by residues 29–32, Lys50, 86–90, Gly414, and Asp495; these read TLGP and DGTTT.

The protein belongs to the chaperonin (HSP60) family. Forms a cylinder of 14 subunits composed of two heptameric rings stacked back-to-back. Interacts with the co-chaperonin GroES.

The protein resides in the cytoplasm. The catalysed reaction is ATP + H2O + a folded polypeptide = ADP + phosphate + an unfolded polypeptide.. Together with its co-chaperonin GroES, plays an essential role in assisting protein folding. The GroEL-GroES system forms a nano-cage that allows encapsulation of the non-native substrate proteins and provides a physical environment optimized to promote and accelerate protein folding. The sequence is that of Chaperonin GroEL from Parvibaculum lavamentivorans (strain DS-1 / DSM 13023 / NCIMB 13966).